The chain runs to 396 residues: Elongation factor Tu (396 aa).

Residues 10–206 (KPHCNIGTIG…EVDAYIPQPE (197 aa)) enclose the tr-type G domain. The G1 stretch occupies residues 19-26 (GHVDHGKT). GTP is bound at residue 19–26 (GHVDHGKT). Thr26 contacts Mg(2+). Positions 60–64 (GITIS) are G2. Residues 81-84 (DCPG) are G3. GTP-binding positions include 81–85 (DCPGH) and 136–139 (NKCD). Residues 136–139 (NKCD) form a G4 region. A G5 region spans residues 174–176 (SAL).

Belongs to the TRAFAC class translation factor GTPase superfamily. Classic translation factor GTPase family. EF-Tu/EF-1A subfamily. As to quaternary structure, monomer.

The protein localises to the cytoplasm. It catalyses the reaction GTP + H2O = GDP + phosphate + H(+). Its function is as follows. GTP hydrolase that promotes the GTP-dependent binding of aminoacyl-tRNA to the A-site of ribosomes during protein biosynthesis. This Paramagnetospirillum magneticum (strain ATCC 700264 / AMB-1) (Magnetospirillum magneticum) protein is Elongation factor Tu.